A 341-amino-acid chain; its full sequence is Aromatic amino acid aminotransferase (341 aa).

The residue at position 213 (Lys-213) is an N6-(pyridoxal phosphate)lysine.

Belongs to the class-II pyridoxal-phosphate-dependent aminotransferase family. As to quaternary structure, homodimer. Pyridoxal 5'-phosphate is required as a cofactor.

The catalysed reaction is an aromatic L-alpha-amino acid + 2-oxoglutarate = an aromatic oxo-acid + L-glutamate. In terms of biological role, aminotransferase that catalyzes the conversion of aromatic amino acids and 2-oxoglutarate into corresponding aromatic oxo acids and L-glutamate. The protein is Aromatic amino acid aminotransferase of Corynebacterium glutamicum (strain R).